Here is a 319-residue protein sequence, read N- to C-terminus: Large ribosomal subunit protein eL8 (319 aa).

K87 is modified (N6-acetyllysine). K101 is covalently cross-linked (Glycyl lysine isopeptide (Lys-Gly) (interchain with G-Cter in SUMO2)). The residue at position 150 (K150) is an N6-acetyllysine; alternate. K150 is covalently cross-linked (Glycyl lysine isopeptide (Lys-Gly) (interchain with G-Cter in SUMO2); alternate). Residue K178 forms a Glycyl lysine isopeptide (Lys-Gly) (interchain with G-Cter in SUMO2) linkage. The residue at position 270 (K270) is an N6-acetyllysine. K298 is covalently cross-linked (Glycyl lysine isopeptide (Lys-Gly) (interchain with G-Cter in SUMO2)).

It belongs to the eukaryotic ribosomal protein eL8 family. In terms of assembly, component of the large ribosomal subunit. Interacts with CRY1. Interacts with DICER1, AGO2, TARBP2, MOV10 and EIF6; they form a large RNA-induced silencing complex (RISC).

It localises to the cytoplasm. In terms of biological role, component of the large ribosomal subunit. The ribosome is a large ribonucleoprotein complex responsible for the synthesis of proteins in the cell. The chain is Large ribosomal subunit protein eL8 (RPL7A) from Oryctolagus cuniculus (Rabbit).